The chain runs to 201 residues: Dephospho-CoA kinase (201 aa).

Residues 4-201 enclose the DPCK domain; the sequence is SVGLTGNIAS…KYLREAKIKQ (198 aa). 12-17 serves as a coordination point for ATP; sequence ASGKST.

This sequence belongs to the CoaE family.

Its subcellular location is the cytoplasm. It catalyses the reaction 3'-dephospho-CoA + ATP = ADP + CoA + H(+). It functions in the pathway cofactor biosynthesis; coenzyme A biosynthesis; CoA from (R)-pantothenate: step 5/5. In terms of biological role, catalyzes the phosphorylation of the 3'-hydroxyl group of dephosphocoenzyme A to form coenzyme A. The protein is Dephospho-CoA kinase of Legionella pneumophila (strain Lens).